Here is a 691-residue protein sequence, read N- to C-terminus: DNA-directed RNA polymerase subunit beta' (691 aa).

Zn(2+) contacts are provided by C69, C71, C87, and C90. Positions 489, 491, and 493 each coordinate Mg(2+).

This sequence belongs to the RNA polymerase beta' chain family. RpoC1 subfamily. As to quaternary structure, in plastids the minimal PEP RNA polymerase catalytic core is composed of four subunits: alpha, beta, beta', and beta''. When a (nuclear-encoded) sigma factor is associated with the core the holoenzyme is formed, which can initiate transcription. Mg(2+) is required as a cofactor. Requires Zn(2+) as cofactor.

Its subcellular location is the plastid. The protein localises to the chloroplast. The catalysed reaction is RNA(n) + a ribonucleoside 5'-triphosphate = RNA(n+1) + diphosphate. Its function is as follows. DNA-dependent RNA polymerase catalyzes the transcription of DNA into RNA using the four ribonucleoside triphosphates as substrates. This Jasminum nudiflorum (Winter jasmine) protein is DNA-directed RNA polymerase subunit beta'.